The primary structure comprises 292 residues: Bifunctional protein FolD (292 aa).

Residues 166–168 (GRS), serine 191, and isoleucine 232 each bind NADP(+).

Belongs to the tetrahydrofolate dehydrogenase/cyclohydrolase family. Homodimer.

It catalyses the reaction (6R)-5,10-methylene-5,6,7,8-tetrahydrofolate + NADP(+) = (6R)-5,10-methenyltetrahydrofolate + NADPH. The enzyme catalyses (6R)-5,10-methenyltetrahydrofolate + H2O = (6R)-10-formyltetrahydrofolate + H(+). It participates in one-carbon metabolism; tetrahydrofolate interconversion. In terms of biological role, catalyzes the oxidation of 5,10-methylenetetrahydrofolate to 5,10-methenyltetrahydrofolate and then the hydrolysis of 5,10-methenyltetrahydrofolate to 10-formyltetrahydrofolate. This Wolbachia sp. subsp. Drosophila simulans (strain wRi) protein is Bifunctional protein FolD.